A 241-amino-acid chain; its full sequence is Orotidine 5'-phosphate decarboxylase (241 aa).

Residues D15, K37, 64-73, T126, R187, Q196, G216, and R217 contribute to the substrate site; that span reads DLKYHDIPNT. K66 serves as the catalytic Proton donor.

The protein belongs to the OMP decarboxylase family. Type 1 subfamily. In terms of assembly, homodimer.

It catalyses the reaction orotidine 5'-phosphate + H(+) = UMP + CO2. Its pathway is pyrimidine metabolism; UMP biosynthesis via de novo pathway; UMP from orotate: step 2/2. Catalyzes the decarboxylation of orotidine 5'-monophosphate (OMP) to uridine 5'-monophosphate (UMP). This chain is Orotidine 5'-phosphate decarboxylase, found in Geotalea uraniireducens (strain Rf4) (Geobacter uraniireducens).